We begin with the raw amino-acid sequence, 699 residues long: tRNA wybutosine-synthesizing protein 4 (699 aa).

S-adenosyl-L-methionine contacts are provided by residues R94, G120, D151, 197-198 (DL), and E224.

It belongs to the methyltransferase superfamily. LCMT family.

The enzyme catalyses 7-[(3S)-3-amino-3-carboxypropyl]wyosine(37) in tRNA(Phe) + S-adenosyl-L-methionine = 7-[(3S)-(3-amino-3-methoxycarbonyl)propyl]wyosine(37) in tRNA(Phe) + S-adenosyl-L-homocysteine. It catalyses the reaction 7-[(3S)-(3-amino-3-methoxycarbonyl)propyl]wyosine(37) in tRNA(Phe) + S-adenosyl-L-methionine + CO2 = wybutosine(37) in tRNA(Phe) + S-adenosyl-L-homocysteine + 2 H(+). It participates in tRNA modification; wybutosine-tRNA(Phe) biosynthesis. In terms of biological role, probable S-adenosyl-L-methionine-dependent methyltransferase that acts as a component of the wybutosine biosynthesis pathway. Wybutosine is a hyper modified guanosine with a tricyclic base found at the 3'-position adjacent to the anticodon of eukaryotic phenylalanine tRNA. May methylate the carboxyl group of leucine residues to form alpha-leucine ester residues. The protein is tRNA wybutosine-synthesizing protein 4 (PPM2) of Eremothecium gossypii (strain ATCC 10895 / CBS 109.51 / FGSC 9923 / NRRL Y-1056) (Yeast).